We begin with the raw amino-acid sequence, 459 residues long: Elongation factor 1-alpha 2 (459 aa).

The tr-type G domain occupies 5–242; the sequence is KTHINIVVIG…DCIIPPQRPT (238 aa). The interval 14 to 21 is G1; sequence GHVDSGKS. The segment at 70-74 is G2; sequence GITID. Residues 91–94 are G3; it reads DAPG. Residues 153 to 156 are G4; it reads NKMD. Residues 194–196 are G5; that stretch reads SGF. 5-glutamyl glycerylphosphorylethanolamine occurs at positions 301 and 374.

The protein belongs to the TRAFAC class translation factor GTPase superfamily. Classic translation factor GTPase family. EF-Tu/EF-1A subfamily.

It is found in the cytoplasm. This protein promotes the GTP-dependent binding of aminoacyl-tRNA to the A-site of ribosomes during protein biosynthesis. This chain is Elongation factor 1-alpha 2 (eft-2), found in Oscheius tipulae.